The chain runs to 194 residues: Probable nicotinate-nucleotide adenylyltransferase (194 aa).

Belongs to the NadD family.

The catalysed reaction is nicotinate beta-D-ribonucleotide + ATP + H(+) = deamido-NAD(+) + diphosphate. Its pathway is cofactor biosynthesis; NAD(+) biosynthesis; deamido-NAD(+) from nicotinate D-ribonucleotide: step 1/1. Catalyzes the reversible adenylation of nicotinate mononucleotide (NaMN) to nicotinic acid adenine dinucleotide (NaAD). The chain is Probable nicotinate-nucleotide adenylyltransferase from Christiangramia forsetii (strain DSM 17595 / CGMCC 1.15422 / KT0803) (Gramella forsetii).